The chain runs to 253 residues: Proteasome subunit alpha type-3 (253 aa).

Residues 230 to 253 (ELTEKARKAGDAANKDEDSDNETH) form a disordered region. Residues 231–253 (LTEKARKAGDAANKDEDSDNETH) are compositionally biased toward basic and acidic residues. Ser-248 is subject to Phosphoserine.

This sequence belongs to the peptidase T1A family. The 26S proteasome consists of a 20S proteasome core and two 19S regulatory subunits. The 20S proteasome core is composed of 28 subunits that are arranged in four stacked rings, resulting in a barrel-shaped structure. The two end rings are each formed by seven alpha subunits, and the two central rings are each formed by seven beta subunits. The catalytic chamber with the active sites is on the inside of the barrel. Interacts with ntc.

The protein localises to the cytoplasm. It is found in the nucleus. Its function is as follows. The proteasome is a multicatalytic proteinase complex which is characterized by its ability to cleave peptides with Arg, Phe, Tyr, Leu, and Glu adjacent to the leaving group at neutral or slightly basic pH. The proteasome has an ATP-dependent proteolytic activity. The protein is Proteasome subunit alpha type-3 (Prosalpha7) of Drosophila melanogaster (Fruit fly).